The sequence spans 155 residues: MPKKVGYKRIGVDFRYGDESVARFINAVMLDGKKAVATKIVYDAFAIIAEKLAGEDPLEVYRKAMSHIAPVVEVRSKRVGGATYQIPMEVKASRRGALAFRWLKIYAAKRGGRSMAEKLAAELMDAANEQGASVKKRDEVHRMADANKAFAHFRF.

This sequence belongs to the universal ribosomal protein uS7 family. As to quaternary structure, part of the 30S ribosomal subunit. Contacts proteins S9 and S11.

Functionally, one of the primary rRNA binding proteins, it binds directly to 16S rRNA where it nucleates assembly of the head domain of the 30S subunit. Is located at the subunit interface close to the decoding center, probably blocks exit of the E-site tRNA. In Pelodictyon phaeoclathratiforme (strain DSM 5477 / BU-1), this protein is Small ribosomal subunit protein uS7.